The primary structure comprises 432 residues: Adenylosuccinate synthetase (432 aa).

GTP is bound by residues 13–19 and 41–43; these read GDEGKGK and GHT. The active-site Proton acceptor is the D14. Positions 14 and 41 each coordinate Mg(2+). IMP-binding positions include 14–17, 39–42, T130, R144, Q225, T240, and R304; these read DEGK and NAGH. H42 serves as the catalytic Proton donor. 300 to 306 lines the substrate pocket; it reads STTGRRR. Residues R306, 332 to 334, and 415 to 417 each bind GTP; these read KID and STG.

The protein belongs to the adenylosuccinate synthetase family. As to quaternary structure, homodimer. The cofactor is Mg(2+).

It is found in the cytoplasm. It carries out the reaction IMP + L-aspartate + GTP = N(6)-(1,2-dicarboxyethyl)-AMP + GDP + phosphate + 2 H(+). It functions in the pathway purine metabolism; AMP biosynthesis via de novo pathway; AMP from IMP: step 1/2. Functionally, plays an important role in the de novo pathway of purine nucleotide biosynthesis. Catalyzes the first committed step in the biosynthesis of AMP from IMP. The protein is Adenylosuccinate synthetase of Blochmanniella pennsylvanica (strain BPEN).